The primary structure comprises 422 residues: Glyceraldehyde-3-phosphate dehydrogenase GAPCP1, chloroplastic (422 aa).

A chloroplast-targeting transit peptide spans 1-69; the sequence is MAFSSLLRSA…NARSVQPIKA (69 aa). A compositionally biased stretch (polar residues) spans 50 to 63; that stretch reads SGISSSLQNGNARS. A disordered region spans residues 50 to 84; that stretch reads SGISSSLQNGNARSVQPIKATATEVPSAVRRSSSS. Threonine 70 bears the N-acetylthreonine mark. NAD(+) contacts are provided by residues 96-97, aspartate 118, and arginine 164; that span reads RI. Residues 235-237, threonine 266, 295-296, and arginine 318 each bind D-glyceraldehyde 3-phosphate; these read SCT and TG. Catalysis depends on cysteine 236, which acts as the Nucleophile. Asparagine 400 contributes to the NAD(+) binding site.

This sequence belongs to the glyceraldehyde-3-phosphate dehydrogenase family. Homotetramer. As to expression, expressed in shoot and root vasculature, leaf veins and vascular tissue of flowers and siliques.

Its subcellular location is the plastid. The protein localises to the chloroplast stroma. The catalysed reaction is D-glyceraldehyde 3-phosphate + phosphate + NAD(+) = (2R)-3-phospho-glyceroyl phosphate + NADH + H(+). In terms of biological role, involved in plastidial glycolytic pathway and plays a specific role in glycolytic energy production in non-green plastids and chloroplasts. Essential for breakdown of starch to form sucrose for export to non-photosynthetic tissues, and to generate primary metabolites for anabolic pathways such as fatty acid and amino acid synthesis. Plays an important role in plant development by providing substrates for the phosphorylated pathway of serine biosynthesis in roots. Plays a crucial role in pollen development. Functionally redundant with GAPCP2. The sequence is that of Glyceraldehyde-3-phosphate dehydrogenase GAPCP1, chloroplastic (GAPCP1) from Arabidopsis thaliana (Mouse-ear cress).